Here is a 390-residue protein sequence, read N- to C-terminus: Succinyl-diaminopimelate desuccinylase (390 aa).

H75 contributes to the Zn(2+) binding site. Residue D77 is part of the active site. D108 is a Zn(2+) binding site. E141 (proton acceptor) is an active-site residue. Residues E142, E170, and H359 each coordinate Zn(2+).

It belongs to the peptidase M20A family. DapE subfamily. In terms of assembly, homodimer. Zn(2+) serves as cofactor. It depends on Co(2+) as a cofactor.

It catalyses the reaction N-succinyl-(2S,6S)-2,6-diaminopimelate + H2O = (2S,6S)-2,6-diaminopimelate + succinate. It functions in the pathway amino-acid biosynthesis; L-lysine biosynthesis via DAP pathway; LL-2,6-diaminopimelate from (S)-tetrahydrodipicolinate (succinylase route): step 3/3. Catalyzes the hydrolysis of N-succinyl-L,L-diaminopimelic acid (SDAP), forming succinate and LL-2,6-diaminopimelate (DAP), an intermediate involved in the bacterial biosynthesis of lysine and meso-diaminopimelic acid, an essential component of bacterial cell walls. The protein is Succinyl-diaminopimelate desuccinylase of Maricaulis maris (strain MCS10) (Caulobacter maris).